Consider the following 275-residue polypeptide: MASVTFRDGFLCVSALITFVFVFVTGADFVRFVSFRAINHNLSGAAPLCRDSVPWSVALRDGVVQKAVAVDVLLLVVFSLQHSLLAWTPVKRVCQSVFGVLSRSVYCFTTAAALQILMHYWRPVTSAPCLWSVSSAPWEIWFPLICFIVHFLCWAIICSILLIFDYPELLGIKQVYYECLGLGDPLLLKSERAQRLYSHLRHPVCVELLTVLWLLPSFPLDRLLLAVFLTVYLILAHSLDKQDCAYLRHQLRNKLQLFSTPLEGSEQTNDNNKLE.

Over 1 to 4 the chain is Nuclear; that stretch reads MASV. The helical transmembrane segment at 5–32 threads the bilayer; the sequence is TFRDGFLCVSALITFVFVFVTGADFVRF. The Perinuclear space segment spans residues 33 to 63; that stretch reads VSFRAINHNLSGAAPLCRDSVPWSVALRDGV. A helical membrane pass occupies residues 64 to 85; the sequence is VQKAVAVDVLLLVVFSLQHSLL. Residues 86 to 102 lie on the Nuclear side of the membrane; the sequence is AWTPVKRVCQSVFGVLS. A helical membrane pass occupies residues 103–119; it reads RSVYCFTTAAALQILMH. The Perinuclear space portion of the chain corresponds to 120-138; sequence YWRPVTSAPCLWSVSSAPW. The chain crosses the membrane as a helical span at residues 139 to 169; that stretch reads EIWFPLICFIVHFLCWAIICSILLIFDYPEL. Residues 170–196 lie on the Nuclear side of the membrane; that stretch reads LGIKQVYYECLGLGDPLLLKSERAQRL. The chain crosses the membrane as a helical span at residues 197 to 215; that stretch reads YSHLRHPVCVELLTVLWLL. At 216–221 the chain is on the perinuclear space side; it reads PSFPLD. The helical transmembrane segment at 222-239 threads the bilayer; sequence RLLLAVFLTVYLILAHSL. The Nuclear segment spans residues 240-275; the sequence is DKQDCAYLRHQLRNKLQLFSTPLEGSEQTNDNNKLE.

Belongs to the nurim family.

It localises to the nucleus inner membrane. The chain is Nurim (nrm) from Danio rerio (Zebrafish).